A 547-amino-acid polypeptide reads, in one-letter code: Chaperonin GroEL (547 aa).

ATP contacts are provided by residues 30–33 (TLGP), Lys-51, 87–91 (DGTTT), Gly-415, and Asp-496. Residues 528-547 (KGGGAPAGGGMPGGMGDMDF) are disordered.

It belongs to the chaperonin (HSP60) family. In terms of assembly, forms a cylinder of 14 subunits composed of two heptameric rings stacked back-to-back. Interacts with the co-chaperonin GroES.

It localises to the cytoplasm. It catalyses the reaction ATP + H2O + a folded polypeptide = ADP + phosphate + an unfolded polypeptide.. Its function is as follows. Together with its co-chaperonin GroES, plays an essential role in assisting protein folding. The GroEL-GroES system forms a nano-cage that allows encapsulation of the non-native substrate proteins and provides a physical environment optimized to promote and accelerate protein folding. The chain is Chaperonin GroEL from Caulobacter vibrioides (strain ATCC 19089 / CIP 103742 / CB 15) (Caulobacter crescentus).